Reading from the N-terminus, the 309-residue chain is Homoserine kinase (309 aa).

91 to 101 (PIGSGLGSSAC) is a binding site for ATP.

This sequence belongs to the GHMP kinase family. Homoserine kinase subfamily.

It localises to the cytoplasm. It catalyses the reaction L-homoserine + ATP = O-phospho-L-homoserine + ADP + H(+). The protein operates within amino-acid biosynthesis; L-threonine biosynthesis; L-threonine from L-aspartate: step 4/5. Catalyzes the ATP-dependent phosphorylation of L-homoserine to L-homoserine phosphate. This is Homoserine kinase from Photorhabdus laumondii subsp. laumondii (strain DSM 15139 / CIP 105565 / TT01) (Photorhabdus luminescens subsp. laumondii).